The following is a 146-amino-acid chain: SsrA-binding protein (146 aa).

Residues 127–139 (KRQTIKDRDNSRE) show a composition bias toward basic and acidic residues. A disordered region spans residues 127–146 (KRQTIKDRDNSREARKHIRV).

Belongs to the SmpB family.

It is found in the cytoplasm. Functionally, required for rescue of stalled ribosomes mediated by trans-translation. Binds to transfer-messenger RNA (tmRNA), required for stable association of tmRNA with ribosomes. tmRNA and SmpB together mimic tRNA shape, replacing the anticodon stem-loop with SmpB. tmRNA is encoded by the ssrA gene; the 2 termini fold to resemble tRNA(Ala) and it encodes a 'tag peptide', a short internal open reading frame. During trans-translation Ala-aminoacylated tmRNA acts like a tRNA, entering the A-site of stalled ribosomes, displacing the stalled mRNA. The ribosome then switches to translate the ORF on the tmRNA; the nascent peptide is terminated with the 'tag peptide' encoded by the tmRNA and targeted for degradation. The ribosome is freed to recommence translation, which seems to be the essential function of trans-translation. The chain is SsrA-binding protein from Malacoplasma penetrans (strain HF-2) (Mycoplasma penetrans).